Reading from the N-terminus, the 486-residue chain is MTTPHLDSAQDIDLSRVHLIGIGGAGMSGVARILLARGKTVTGSDAKDSRTLLPLRAVGATIAVGHAAENLELSGELPTVVVTSFAAIPQDNPELVRAREEGIPVIRRSDLLGELLEGSTQVLIAGTHGKTSTTSMSVVAMQAAGMDPSFAIGGQLNKAGTNAHHGTGEVFIAEADESDASLLRYKPNVAVVTNVEPDHLDFFKTPEAYFQVFDDFAGRITPNGKLVVCLNDPHAAELGERSVRKGIKTVGYGTADAVQAHPEVPAMATIVDSQVVAEGTRATINIDGQEVSVILQIPGDHMVLNGAAALLAGYLVGGDVDKLVEGLSDFSGVRRRFEFHGAIEGGKFNGAAIYDDYAHHPTEVTAVLSAARTRVKAAGKGRVIVAFQPHLYSRTMEFQKEFAEALSLADAAVVLEIYGAREQPVDGVSSEIITDAMTIPVVYEPNFSAVPERIAEIAGPNDIVLTMGAGSVTMLAPEILDQLQNN.

Residue 126-132 (GTHGKTS) participates in ATP binding.

It belongs to the MurCDEF family.

It localises to the cytoplasm. The catalysed reaction is UDP-N-acetyl-alpha-D-muramate + L-alanine + ATP = UDP-N-acetyl-alpha-D-muramoyl-L-alanine + ADP + phosphate + H(+). The protein operates within cell wall biogenesis; peptidoglycan biosynthesis. Functionally, cell wall formation. The protein is UDP-N-acetylmuramate--L-alanine ligase of Corynebacterium glutamicum (strain R).